Reading from the N-terminus, the 425-residue chain is Histidine--tRNA ligase (425 aa).

It belongs to the class-II aminoacyl-tRNA synthetase family. Homodimer.

The protein resides in the cytoplasm. The enzyme catalyses tRNA(His) + L-histidine + ATP = L-histidyl-tRNA(His) + AMP + diphosphate + H(+). The polypeptide is Histidine--tRNA ligase (Shewanella sp. (strain MR-7)).